A 211-amino-acid polypeptide reads, in one-letter code: Rho-related GTP-binding protein RhoF (211 aa).

Position 1 is an N-acetylmethionine (M1). 26-33 provides a ligand contact to GTP; sequence GDGGCGKT. An Effector region motif is present at residues 48–56; that stretch reads YAPSVFEKY. Residues 73 to 77 and 131 to 134 each bind GTP; these read DTAGQ and CKTD. C208 bears the Cysteine methyl ester mark. C208 carries the S-geranylgeranyl cysteine lipid modification. Residues 209 to 211 constitute a propeptide, removed in mature form; that stretch reads LLL.

Belongs to the small GTPase superfamily. Rho family.

Its subcellular location is the cell membrane. It is found in the cytoplasm. It localises to the cytoskeleton. Its function is as follows. Plasma membrane-associated small GTPase which cycles between an active GTP-bound and an inactive GDP-bound state. Causes the formation of thin, actin-rich surface projections called filopodia. Functions cooperatively with CDC42 and Rac to generate additional structures, increasing the diversity of actin-based morphology. The sequence is that of Rho-related GTP-binding protein RhoF (RHOF) from Homo sapiens (Human).